Here is a 257-residue protein sequence, read N- to C-terminus: ECF RNA polymerase sigma factor SigE (257 aa).

The tract at residues 87 to 153 (LVRQHADRVY…FLDMVRRRAR (67 aa)) is sigma-70 factor domain-2. The Polymerase core binding signature appears at 111–114 (DLTQ). Residues 186–236 (LQAALASLPPEFRAAVVLCDIEGLSYEEIGATLGVKLGTVRSRIHRGRQAL) form a sigma-70 factor domain-4 region. The segment at residues 211 to 230 (YEEIGATLGVKLGTVRSRIH) is a DNA-binding region (H-T-H motif).

This sequence belongs to the sigma-70 factor family. ECF subfamily. Interacts transiently with the RNA polymerase catalytic core formed by RpoA, RpoB, RpoC and RpoZ (2 alpha, 1 beta, 1 beta' and 1 omega subunit) to form the RNA polymerase holoenzyme that can initiate transcription. Interacts (via sigma-70 factor domain 4) with cognate anti-sigma-E factor RseA under reducing conditions, which stops the sigma factor from functioning.

Sigma factors are initiation factors that promote the attachment of RNA polymerase to specific initiation sites and are then released. Extracytoplasmic function (ECF) sigma factors are held in an inactive form by an anti-sigma factor until released. Responds to surface stress (H(2)O(2)). In Mycobacterium tuberculosis (strain ATCC 35801 / TMC 107 / Erdman), this protein is ECF RNA polymerase sigma factor SigE (sigE).